The chain runs to 243 residues: Retrotransposon Gag-like protein 6 (243 aa).

A compositionally biased stretch (polar residues) spans 1 to 12 (MVQPRTSKTESP). Positions 1-22 (MVQPRTSKTESPASAPGASAQM) are disordered. Positions 29 to 69 (LTSLRLTNSALRREASTLRAEKANLTNMLESVMAELTLLRT) form a coiled coil. Disordered regions lie at residues 84 to 105 (SAIT…PEPF) and 218 to 243 (TGSC…GRNL). Residues 85-94 (AITSNGTRPM) show a composition bias toward polar residues.

The protein belongs to the LDOC1 family. As to expression, widely expressed.

This is Retrotransposon Gag-like protein 6 from Mus musculus (Mouse).